The primary structure comprises 163 residues: Steroid receptor-associated and regulated protein (163 aa).

The span at 1–16 shows a compositional bias: basic and acidic residues; the sequence is MAFSKDPRRTSLRDSS. 2 disordered regions span residues 1–30 and 96–149; these read MAFS…CAPK and ALDG…EKVK. Polar residues predominate over residues 17-26; the sequence is VEMSSGTQPS.

In terms of assembly, interacts with 14-3-3 proteins.

Its function is as follows. May regulate the transcriptional function of androgen and estrogen receptors. This is Steroid receptor-associated and regulated protein from Mus musculus (Mouse).